A 439-amino-acid polypeptide reads, in one-letter code: Probable anion transporter 7 (439 aa).

The first 28 residues, methionine 1–isoleucine 28, serve as a signal peptide directing secretion. The next 11 membrane-spanning stretches (helical) occupy residues methionine 53–alanine 73, valine 81–lysine 101, valine 104–isoleucine 124, leucine 143–valine 163, glycine 167–leucine 187, isoleucine 232–leucine 252, leucine 280–isoleucine 300, lysine 312–phenylalanine 332, threonine 338–valine 358, phenylalanine 367–valine 387, and threonine 412–serine 432.

It belongs to the major facilitator superfamily. Sodium/anion cotransporter (TC 2.A.1.14) family.

Its subcellular location is the cell membrane. Functionally, probable anion transporter. This is Probable anion transporter 7 (PHT4;7) from Oryza sativa subsp. japonica (Rice).